We begin with the raw amino-acid sequence, 224 residues long: 7-cyano-7-deazaguanine synthase (224 aa).

10-20 (LSGGLDSATVV) contacts ATP. Cys-189, Cys-199, Cys-202, and Cys-205 together coordinate Zn(2+).

It belongs to the QueC family. Requires Zn(2+) as cofactor.

It catalyses the reaction 7-carboxy-7-deazaguanine + NH4(+) + ATP = 7-cyano-7-deazaguanine + ADP + phosphate + H2O + H(+). It functions in the pathway purine metabolism; 7-cyano-7-deazaguanine biosynthesis. Functionally, catalyzes the ATP-dependent conversion of 7-carboxy-7-deazaguanine (CDG) to 7-cyano-7-deazaguanine (preQ(0)). The polypeptide is 7-cyano-7-deazaguanine synthase (Pseudomonas aeruginosa (strain LESB58)).